The chain runs to 141 residues: Holin (141 aa).

2 helical membrane-spanning segments follow: residues 9 to 29 (LYYV…WGGI) and 37 to 57 (IGDI…ATAA). Positions 74-108 (VDQVTRGVEQVLAAKQNAEAEVERVKQALESAVNG) form a coiled coil.

The protein belongs to the Mycobacterium phage D29 holin family. In terms of assembly, homomultimer. Self-associates to form a pore.

The protein localises to the host cell inner membrane. Functionally, accumulates harmlessly in the cytoplasmic membrane until it reaches a critical concentration that triggers the formation of micron-scale pores (holes) causing host cell membrane disruption and endolysin escape into the periplasmic space. Determines the precise timing of host cell lysis. Participates with the endolysin protein in the sequential events which lead to the programmed host cell lysis releasing the mature viral particles from the host cell. This chain is Holin (11), found in Mycobacterium (Mycobacteriophage D29).